The primary structure comprises 243 residues: Sec-independent protein translocase protein TatC (243 aa).

A run of 7 helical transmembrane segments spans residues 18 to 38 (VIII…NYVD), 70 to 90 (IAII…IWSF), 106 to 126 (MIPV…FTVF), 132 to 152 (FLLQ…KYIS), 153 to 173 (FALN…VVYI), 191 to 211 (YALL…DVIS), and 213 to 233 (LLMA…AKFI).

The protein belongs to the TatC family. In terms of assembly, forms a complex with TatA.

Its subcellular location is the cell membrane. Its function is as follows. Part of the twin-arginine translocation (Tat) system that transports large folded proteins containing a characteristic twin-arginine motif in their signal peptide across membranes. This Carboxydothermus hydrogenoformans (strain ATCC BAA-161 / DSM 6008 / Z-2901) protein is Sec-independent protein translocase protein TatC.